A 453-amino-acid polypeptide reads, in one-letter code: Pup--protein ligase (453 aa).

Position 9 (Glu-9) interacts with Mg(2+). Arg-53 is a binding site for ATP. A Mg(2+)-binding site is contributed by Tyr-55. The active-site Proton acceptor is Asp-57. Glu-63 contacts Mg(2+). 2 residues coordinate ATP: Thr-66 and Trp-420.

Belongs to the Pup ligase/Pup deamidase family. Pup-conjugating enzyme subfamily.

It catalyses the reaction ATP + [prokaryotic ubiquitin-like protein]-L-glutamate + [protein]-L-lysine = ADP + phosphate + N(6)-([prokaryotic ubiquitin-like protein]-gamma-L-glutamyl)-[protein]-L-lysine.. It functions in the pathway protein degradation; proteasomal Pup-dependent pathway. Its pathway is protein modification; protein pupylation. In terms of biological role, catalyzes the covalent attachment of the prokaryotic ubiquitin-like protein modifier Pup to the proteasomal substrate proteins, thereby targeting them for proteasomal degradation. This tagging system is termed pupylation. The ligation reaction involves the side-chain carboxylate of the C-terminal glutamate of Pup and the side-chain amino group of a substrate lysine. This Kineococcus radiotolerans (strain ATCC BAA-149 / DSM 14245 / SRS30216) protein is Pup--protein ligase.